Reading from the N-terminus, the 326-residue chain is Protein-ribulosamine 3-kinase, chloroplastic (326 aa).

Residues 1–30 (MAVASLSICFSARPHLLLRNFSPRPKFVAM) constitute a chloroplast transit peptide. Position 125-127 (125-127 (EFI)) interacts with ATP. Catalysis depends on D230, which acts as the Proton acceptor.

The protein belongs to the fructosamine kinase family.

The protein localises to the plastid. Its subcellular location is the chloroplast. The enzyme catalyses N(6)-D-ribulosyl-L-lysyl-[protein] + ATP = N(6)-(3-O-phospho-D-ribulosyl)-L-lysyl-[protein] + ADP + H(+). It catalyses the reaction N(6)-(D-erythrulosyl)-L-lysyl-[protein] + ATP = N(6)-(3-O-phospho-D-erythrulosyl)-L-lysyl-[protein] + ADP + H(+). Its function is as follows. Initiates a process leading to the deglycation of proteins. Phosphorylates low-molecular-mass and protein-bound erythrulosamines and ribulosamines, but not fructosamines or psicosamines, on the third carbon of the sugar moiety. Protein-bound erythrulosamine 3-phosphates and ribulosamine 3-phosphates are unstable and decompose under physiological conditions. The protein is Protein-ribulosamine 3-kinase, chloroplastic of Arabidopsis thaliana (Mouse-ear cress).